We begin with the raw amino-acid sequence, 482 residues long: Cilia- and flagella-associated protein 53 (482 aa).

Coiled-coil stretches lie at residues 9-40, 67-124, and 152-413; these read DARI…AVAE, ADLN…QALA, and IEER…AKDA. Positions 462–482 are disordered; sequence VNQTLSSTDPPVWHGRRKFDW.

The protein belongs to the CFAP53 family.

The protein resides in the cell projection. Its subcellular location is the cilium. The protein localises to the flagellum. May play a role in filopodium movement. The protein is Cilia- and flagella-associated protein 53 of Chlamydomonas reinhardtii (Chlamydomonas smithii).